A 447-amino-acid polypeptide reads, in one-letter code: ATP-dependent protease ATPase subunit HslU (447 aa).

ATP contacts are provided by residues I18, 60–65, D259, E325, and R397; that span reads GVGKTE.

The protein belongs to the ClpX chaperone family. HslU subfamily. A double ring-shaped homohexamer of HslV is capped on each side by a ring-shaped HslU homohexamer. The assembly of the HslU/HslV complex is dependent on binding of ATP.

Its subcellular location is the cytoplasm. Its function is as follows. ATPase subunit of a proteasome-like degradation complex; this subunit has chaperone activity. The binding of ATP and its subsequent hydrolysis by HslU are essential for unfolding of protein substrates subsequently hydrolyzed by HslV. HslU recognizes the N-terminal part of its protein substrates and unfolds these before they are guided to HslV for hydrolysis. This Burkholderia cenocepacia (strain HI2424) protein is ATP-dependent protease ATPase subunit HslU.